The sequence spans 190 residues: MIGRITGTLIEKSPPVVCVDVNGVGYEIDVPMSTLYALPETGARVTLFTHLVVREDAQLLYGFGSSAERSTFRELIKVTGIGARTALAVLSGLSVAELSQAITLQETGRLTRVPGIGKKTAERLLLEMRGKLGADIGATPHAAGGHQSDILNALLALGYSDKESQAALKKLPEGVDVSEGIRLALKALVR.

Residues 1-64 (MIGRITGTLI…EDAQLLYGFG (64 aa)) form a domain I region. The tract at residues 65–137 (SSAERSTFRE…MRGKLGADIG (73 aa)) is domain II. A flexible linker region spans residues 137–141 (GATPH). Positions 142 to 190 (AAGGHQSDILNALLALGYSDKESQAALKKLPEGVDVSEGIRLALKALVR) are domain III.

The protein belongs to the RuvA family. Homotetramer. Forms an RuvA(8)-RuvB(12)-Holliday junction (HJ) complex. HJ DNA is sandwiched between 2 RuvA tetramers; dsDNA enters through RuvA and exits via RuvB. An RuvB hexamer assembles on each DNA strand where it exits the tetramer. Each RuvB hexamer is contacted by two RuvA subunits (via domain III) on 2 adjacent RuvB subunits; this complex drives branch migration. In the full resolvosome a probable DNA-RuvA(4)-RuvB(12)-RuvC(2) complex forms which resolves the HJ.

It localises to the cytoplasm. Its function is as follows. The RuvA-RuvB-RuvC complex processes Holliday junction (HJ) DNA during genetic recombination and DNA repair, while the RuvA-RuvB complex plays an important role in the rescue of blocked DNA replication forks via replication fork reversal (RFR). RuvA specifically binds to HJ cruciform DNA, conferring on it an open structure. The RuvB hexamer acts as an ATP-dependent pump, pulling dsDNA into and through the RuvAB complex. HJ branch migration allows RuvC to scan DNA until it finds its consensus sequence, where it cleaves and resolves the cruciform DNA. The protein is Holliday junction branch migration complex subunit RuvA of Bordetella parapertussis (strain 12822 / ATCC BAA-587 / NCTC 13253).